The sequence spans 278 residues: Dehydrogenase/reductase SDR family member 4 (278 aa).

Residue 36-60 (LVTASTDGIGFAIARRLAQDGAHVV) participates in NADP(+) binding. Lys92 is modified (N6-acetyllysine; alternate). N6-succinyllysine; alternate is present on Lys92. Lys105 bears the N6-acetyllysine mark. Ser169 lines the substrate pocket. Tyr182 functions as the Proton acceptor in the catalytic mechanism. Residue Lys186 participates in NADP(+) binding. An N6-acetyllysine; alternate modification is found at Lys216. N6-succinyllysine; alternate is present on Lys216. Ser220 carries the post-translational modification Phosphoserine. Residues Lys227 and Lys234 each carry the N6-succinyllysine modification. A Peroxisomal targeting signal motif is present at residues 276-278 (SRL).

This sequence belongs to the short-chain dehydrogenases/reductases (SDR) family. In terms of assembly, homotetramer.

It is found in the peroxisome. The catalysed reaction is a secondary alcohol + NADP(+) = a ketone + NADPH + H(+). It carries out the reaction 3beta-hydroxy-5beta-pregnane-20-one + NADP(+) = 5beta-pregnan-3,20-dione + NADPH + H(+). It catalyses the reaction 5beta-dihydrotestosterone + NADPH + H(+) = 5beta-androstane-3beta,17beta-diol + NADP(+). The enzyme catalyses 5beta-androstane-3,17-dione + NADPH + H(+) = 3beta-hydroxy-5beta-androstane-17-one + NADP(+). The catalysed reaction is isatin + NADPH + H(+) = 3-hydroxyindolin-2-one + NADP(+). It carries out the reaction lithocholate + NADP(+) = 3-oxo-5beta-cholan-24-oate + NADPH + H(+). It catalyses the reaction 3-oxo-5beta-cholan-24-oate + NADPH + H(+) = isolithocholate + NADP(+). In terms of biological role, NADPH-dependent oxidoreductase which catalyzes the reduction of a variety of compounds bearing carbonyl groups including ketosteroids, alpha-dicarbonyl compounds, aldehydes, aromatic ketones and quinones. Reduces 3-ketosteroids and benzil into 3beta-hydroxysteroids and R-benzoin, respectively, in contrast to the stereoselectivity of non-primate DHRS4s which produce 3alpha-hydroxysteroids and S-benzoin. Diplays low activity toward all-trans-retinal and no activity toward 9-cis-retinal as compared to non-primate mammals. In the reverse reaction, catalyze the NAD-dependent oxidation of 3beta-hydroxysteroids and alcohol, but with much lower efficiency. Involved in the metabolism of 3beta-hydroxysteroids, isatin and xenobiotic carbonyl compounds. The sequence is that of Dehydrogenase/reductase SDR family member 4 (DHRS4) from Pongo abelii (Sumatran orangutan).